Here is a 775-residue protein sequence, read N- to C-terminus: Dipeptidyl peptidase 4 (775 aa).

An N-terminal signal peptide occupies residues 1 to 15 (MKLLSLLMLAGIAQA). Asparagine 81, asparagine 111, asparagine 170, and asparagine 219 each carry an N-linked (GlcNAc...) asparagine glycan. Active-site charge relay system residues include serine 613, aspartate 690, and histidine 725.

Belongs to the peptidase S9B family.

It localises to the secreted. The enzyme catalyses Release of an N-terminal dipeptide, Xaa-Yaa-|-Zaa-, from a polypeptide, preferentially when Yaa is Pro, provided Zaa is neither Pro nor hydroxyproline.. Its function is as follows. Extracellular dipeptidyl-peptidase which removes N-terminal dipeptides sequentially from polypeptides having unsubstituted N-termini provided that the penultimate residue is proline. Contributes to pathogenicity. This chain is Dipeptidyl peptidase 4 (DPP4), found in Trichophyton tonsurans (Scalp ringworm fungus).